We begin with the raw amino-acid sequence, 414 residues long: tRNA N6-adenosine threonylcarbamoyltransferase, mitochondrial (414 aa).

Residues 1-29 (MLILTKTAGVFFKPSKRKVYEFLRSFNFH) constitute a mitochondrion transit peptide. 2 positions are modified to N6-acetyllysine: Lys-74 and Lys-140. A divalent metal cation is bound by residues His-147 and His-151. Substrate-binding positions include 169–173 (LISGG) and Asp-202. The residue at position 203 (Lys-203) is an N6-acetyllysine. Substrate-binding residues include Gly-222 and Glu-226. N6-acetyllysine occurs at positions 230, 240, and 299. Substrate contacts are provided by residues 329-330 (SN) and Thr-357. Residue Asp-358 participates in a divalent metal cation binding.

The protein belongs to the KAE1 / TsaD family. As to quaternary structure, monomer. A divalent metal cation is required as a cofactor. Widely expressed, with maximum expression in pituitary gland, prostate, rectum and uterus.

The protein resides in the mitochondrion. The catalysed reaction is L-threonylcarbamoyladenylate + adenosine(37) in tRNA = N(6)-L-threonylcarbamoyladenosine(37) in tRNA + AMP + H(+). In terms of biological role, required for the formation of a threonylcarbamoyl group on adenosine at position 37 (t(6)A37) in mitochondrial tRNAs that read codons beginning with adenine. Probably involved in the transfer of the threonylcarbamoyl moiety of threonylcarbamoyl-AMP (TC-AMP) to the N6 group of A37. Involved in mitochondrial genome maintenance. This Homo sapiens (Human) protein is tRNA N6-adenosine threonylcarbamoyltransferase, mitochondrial.